Reading from the N-terminus, the 174-residue chain is ATP synthase subunit b, organellar chromatophore (174 aa).

Residues leucine 26–glutamate 46 form a helical membrane-spanning segment.

This sequence belongs to the ATPase B chain family. F-type ATPases have 2 components, F(1) - the catalytic core - and F(0) - the membrane proton channel. F(1) has five subunits: alpha(3), beta(3), gamma(1), delta(1), epsilon(1). F(0) has four main subunits: a(1), b(1), b'(1) and c(10-14). The alpha and beta chains form an alternating ring which encloses part of the gamma chain. F(1) is attached to F(0) by a central stalk formed by the gamma and epsilon chains, while a peripheral stalk is formed by the delta, b and b' chains.

It is found in the plastid. The protein resides in the organellar chromatophore thylakoid membrane. Its function is as follows. F(1)F(0) ATP synthase produces ATP from ADP in the presence of a proton or sodium gradient. F-type ATPases consist of two structural domains, F(1) containing the extramembraneous catalytic core and F(0) containing the membrane proton channel, linked together by a central stalk and a peripheral stalk. During catalysis, ATP synthesis in the catalytic domain of F(1) is coupled via a rotary mechanism of the central stalk subunits to proton translocation. Component of the F(0) channel, it forms part of the peripheral stalk, linking F(1) to F(0). This chain is ATP synthase subunit b, organellar chromatophore, found in Paulinella chromatophora.